A 117-amino-acid polypeptide reads, in one-letter code: UPF0102 protein YPN_3432 (117 aa).

It belongs to the UPF0102 family.

This Yersinia pestis bv. Antiqua (strain Nepal516) protein is UPF0102 protein YPN_3432.